A 306-amino-acid chain; its full sequence is Pantothenate kinase (306 aa).

91-98 (GSVAVGKS) is a binding site for ATP.

The protein belongs to the prokaryotic pantothenate kinase family.

The protein resides in the cytoplasm. The enzyme catalyses (R)-pantothenate + ATP = (R)-4'-phosphopantothenate + ADP + H(+). It functions in the pathway cofactor biosynthesis; coenzyme A biosynthesis; CoA from (R)-pantothenate: step 1/5. The polypeptide is Pantothenate kinase (Streptococcus pyogenes serotype M49 (strain NZ131)).